Consider the following 111-residue polypeptide: Ferredoxin-thioredoxin reductase, catalytic chain (111 aa).

Cys52 is a [4Fe-4S] cluster binding site. Catalysis depends on Cys54, which acts as the Nucleophile. Cys54 and Cys84 form a disulfide bridge. 3 residues coordinate [4Fe-4S] cluster: Cys71, Cys73, and Cys82.

It belongs to the ferredoxin thioredoxin reductase beta subunit family. Heterodimer of subunit A (variable subunit) and subunit B (catalytic subunit). Heterodimeric FTR forms a complex with ferredoxin and thioredoxin. Requires [4Fe-4S] cluster as cofactor.

The protein resides in the plastid. It localises to the chloroplast. It catalyses the reaction [thioredoxin]-disulfide + 2 reduced [2Fe-2S]-[ferredoxin] + 2 H(+) = [thioredoxin]-dithiol + 2 oxidized [2Fe-2S]-[ferredoxin]. Functionally, catalytic subunit of the ferredoxin-thioredoxin reductase (FTR), which catalyzes the two-electron reduction of thioredoxins by the electrons provided by reduced ferredoxin. The chain is Ferredoxin-thioredoxin reductase, catalytic chain (ftrB) from Cyanidium caldarium (Red alga).